The following is a 1051-amino-acid chain: SWI/SNF-related matrix-associated actin-dependent regulator of chromatin subfamily A member 5 (1051 aa).

Pro residues predominate over residues 1 to 15; sequence MSSAVEPPPPPPPES. The disordered stretch occupies residues 1 to 81; sequence MSSAVEPPPP…IQEPDPTYEE (81 aa). Ser2 is subject to N-acetylserine. The segment covering 24–38 has biased composition (gly residues); the sequence is GAGGSSSGNKGGPEG. Over residues 39-53 the composition is skewed to low complexity; it reads GAAPAAPCAAGSGPA. Thr55 carries the phosphothreonine modification. Position 65 is a phosphoserine (Ser65). Over residues 68–81 the composition is skewed to basic and acidic residues; it reads KQKEIQEPDPTYEE. Residue Lys82 forms a Glycyl lysine isopeptide (Lys-Gly) (interchain with G-Cter in SUMO2) linkage. At Thr112 the chain carries Phosphothreonine. 3 positions are modified to phosphoserine: Ser115, Ser136, and Ser170. Residues 191–356 form the Helicase ATP-binding domain; it reads ISLYENGING…WSLLNFLLPD (166 aa). Residue 204–211 participates in ATP binding; the sequence is DEMGLGKT. A DEAH box motif is present at residues 307-310; that stretch reads DEAH. Lys439 carries the N6-acetyllysine modification. Residues 486-637 form the Helicase C-terminal domain; it reads VLDKLLPKLK…SIVIQQGRLV (152 aa). Residues Lys643, Lys646, Lys693, Lys721, and Lys734 each participate in a glycyl lysine isopeptide (Lys-Gly) (interchain with G-Cter in SUMO2) cross-link. Ser754 is subject to Phosphoserine. SANT domains follow at residues 839-891 and 942-1006; these read QGFT…ERCN and KGKN…LITL. A Glycyl lysine isopeptide (Lys-Gly) (interchain with G-Cter in SUMO2) cross-link involves residue Lys965. The disordered stretch occupies residues 1014–1051; that stretch reads LEEKEKAEKKKRGPKPSTQKRKMDGAPDGRGRKKKLKL. A compositionally biased stretch (basic residues) spans 1022–1033; that stretch reads KKKRGPKPSTQK. Basic and acidic residues predominate over residues 1034–1043; the sequence is RKMDGAPDGR.

The protein belongs to the SNF2/RAD54 helicase family. ISWI subfamily. As to quaternary structure, component of the ACF-5 ISWI chromatin-remodeling complex (also called the ACF/WCRF complex) at least composed of SMARCA5/SNF2H and BAZ1A/ACF1, which regulates the spacing of histone octamers on the DNA template to facilitate access to DNA. Within the complex interacts with BAZ1A/ACF1; the interaction is direct and is required to slide nucleosomes from end to center positions on a DNA template in an ATP-dependent manner. Component of the CHRAC ISWI chromatin-remodeling complex at least composed of SMARCA5/SNF2H, BAZ1A/ACF1, CHRAC1 and POLE3; the complex preferentially binds DNA through the CHRAC1-POLE3 heterodimer and possesses ATP-dependent nucleosome-remodeling activity. Within the complex interacts with BAZ1A/ACF1; the interaction is direct and promotes the interaction with the POLE3-CHRAC1 heterodimer. Within the complex interacts with the POLE3-CHRAC1 heterodimer; the interaction is direct and enhances nucleosome sliding activity by the SMARCA5/SNF2H and BAZ1A/ACF1 interaction. Neither POLE3 nor CHRAC1 enhances nucleosome sliding activity of the ACF-5 ISWI chromatin remodeling complex. Component of the WICH-5 ISWI chromatin-remodeling complex (also called the WICH complex) at least composed of SMARCA5/SNF2H and BAZ1B/WSTF, which regulates the spacing of histone octamers on the DNA template to facilitate access to DNA. Within the complex interacts with BAZ1B/WSTF. Component of the NoRC-5 ISWI chromatin-remodeling complex (also called the NoRC chromatin-remodeling complex) at least composed of SMARCA5/SNF2H and BAZ2A/TIP5; the complex suppresses rDNA transcription by a combination of nucleosome remodeling, histone deacetylation, and DNA methylation. Within the complex interacts with BAZ2A/TIP5. Within the complex interacts with HDAC1. Component of the BRF-5 ISWI chromatin-remodeling complex at least composed of SMARCA5/SNF2H and BAZ2B. Within the complex interacts with BAZ2B. Component of the NURF-5 ISWI chromatin-remodeling complex at least composed of SMARCA5/SNF2H and BPTF. Within the complex interacts with BPFT. Component of the CERF-5 ISWI chromatin-remodeling complex at least composed of SMARCA5/SNF2H and CECR2. LUZP1 is detected as part of the CERF-5 complex in embryonic stem cells where it is involved in complex stabilization but is not detected in the complex in the testis. Component of the RSF-5 ISWI chromatin-remodeling complex (also called the RSF complex) at least composed of SMARCA5/SNF2H and RSF1. Within the complex interacts with RSF1. Interacts with the cohesin complex component RAD21; the interaction is direct. Interacts with the NuRD complex components HDAC2, RBBP4 and CHD4; the interactions are direct. Interacts with PCNA. Component of the B-WICH complex, at least composed of SMARCA5/SNF2H, BAZ1B/WSTF, SF3B1, DEK, MYO1C, ERCC6, MYBBP1A and DDX21 which positively regulates RNA polymerase III transcription. Interacts with MYO1C. Interacts with BEND3. Interacts with SIRT6; promoting recruitment to DNA damage sites. Ubiquitously expressed.

It is found in the nucleus. Its subcellular location is the chromosome. The catalysed reaction is ATP + H2O = ADP + phosphate + H(+). In terms of biological role, ATPase that possesses intrinsic ATP-dependent nucleosome-remodeling activity. Catalytic subunit of ISWI chromatin-remodeling complexes, which form ordered nucleosome arrays on chromatin and facilitate access to DNA during DNA-templated processes such as DNA replication, transcription, and repair; this may require intact histone H4 tails. Within the ISWI chromatin-remodeling complexes, slides edge- and center-positioned histone octamers away from their original location on the DNA template. Catalytic activity and histone octamer sliding propensity is regulated and determined by components of the ISWI chromatin-remodeling complexes. The BAZ1A/ACF1-, BAZ1B/WSTF-, BAZ2A/TIP5- and BAZ2B-containing ISWI chromatin-remodeling complexes regulate the spacing of nucleosomes along the chromatin and have the ability to slide mononucleosomes to the center of a DNA template in an ATP-dependent manner. The CECR2- and RSF1-containing ISWI chromatin-remodeling complexes do not have the ability to slide mononucleosomes to the center of a DNA template. Binds to core histones together with RSF1, and is required for the assembly of regular nucleosome arrays by the RSF-5 ISWI chromatin-remodeling complex. Involved in DNA replication and together with BAZ1A/ACF1 is required for replication of pericentric heterochromatin in S-phase. Probably plays a role in repression of RNA polymerase I dependent transcription of the rDNA locus, through the recruitment of the SIN3/HDAC1 corepressor complex to the rDNA promoter. The WICH-5 ISWI chromatin-remodeling complex regulates the transcription of various genes, has a role in RNA polymerase I and RNA polymerase III transcription, mediates the histone H2AX phosphorylation at 'Tyr-142', and is involved in the maintenance of chromatin structures during DNA replication processes. Essential component of the NoRC-5 ISWI chromatin-remodeling complex, a complex that mediates silencing of a fraction of rDNA by recruiting histone-modifying enzymes and DNA methyltransferases, leading to heterochromatin formation and transcriptional silencing. Required for embryonic development and differentiation, and the proliferation of early blastocyst-derived stem cells. In Mus musculus (Mouse), this protein is SWI/SNF-related matrix-associated actin-dependent regulator of chromatin subfamily A member 5 (Smarca5).